A 259-amino-acid chain; its full sequence is 5'-nucleotidase SurE (259 aa).

Residues D8, D9, S39, and N93 each coordinate a divalent metal cation.

This sequence belongs to the SurE nucleotidase family. A divalent metal cation serves as cofactor.

Its subcellular location is the cytoplasm. The catalysed reaction is a ribonucleoside 5'-phosphate + H2O = a ribonucleoside + phosphate. Its function is as follows. Nucleotidase that shows phosphatase activity on nucleoside 5'-monophosphates. In Thermococcus kodakarensis (strain ATCC BAA-918 / JCM 12380 / KOD1) (Pyrococcus kodakaraensis (strain KOD1)), this protein is 5'-nucleotidase SurE.